A 194-amino-acid chain; its full sequence is Large ribosomal subunit protein eL15 (194 aa).

The disordered stretch occupies residues Arg160–Lys194.

Belongs to the eukaryotic ribosomal protein eL15 family.

The polypeptide is Large ribosomal subunit protein eL15 (Methanococcus maripaludis (strain C6 / ATCC BAA-1332)).